A 339-amino-acid polypeptide reads, in one-letter code: Centromere protein N (339 aa).

Phosphoserine occurs at positions 226, 235, and 282.

It belongs to the CENP-N/CHL4 family. Component of the CENPA-NAC complex, at least composed of CENPA, CENPC, CENPH, CENPM, CENPN, CENPT and CENPU. The CENPA-NAC complex interacts with the CENPA-CAD complex, composed of CENPI, CENPK, CENPL, CENPO, CENPP, CENPQ, CENPR and CENPS. Interacts directly with CENPA. Identified in a centromere complex containing histones H2A, H2B and H4, and at least CENPA, CENPB, CENPC, CENPT, CENPN, HJURP, SUPT16H, SSRP1 and RSF1.

The protein localises to the nucleus. The protein resides in the chromosome. Its subcellular location is the centromere. It localises to the kinetochore. Its function is as follows. Component of the CENPA-NAC (nucleosome-associated) complex, a complex that plays a central role in assembly of kinetochore proteins, mitotic progression and chromosome segregation. The CENPA-NAC complex recruits the CENPA-CAD (nucleosome distal) complex and may be involved in incorporation of newly synthesized CENPA into centromeres. CENPN is the first protein to bind specifically to CENPA nucleosomes and the direct binding of CENPA nucleosomes by CENPN is required for centromere assembly. Required for chromosome congression and efficiently align the chromosomes on a metaphase plate. The chain is Centromere protein N (CENPN) from Homo sapiens (Human).